A 163-amino-acid chain; its full sequence is Epithelial membrane protein 3 (163 aa).

The chain crosses the membrane as a helical span at residues 4 to 24 (LLLVVSALHILILILLFVATL). Residues Asn-49 and Asn-56 are each glycosylated (N-linked (GlcNAc...) asparagine). 3 consecutive transmembrane segments (helical) span residues 66 to 86 (VQVL…LFMF), 100 to 120 (TGFC…IYAI), and 139 to 159 (FALA…YIHL).

It belongs to the PMP-22/EMP/MP20 family.

The protein localises to the membrane. In terms of biological role, probably involved in cell proliferation and cell-cell interactions. The polypeptide is Epithelial membrane protein 3 (EMP3) (Bos taurus (Bovine)).